Consider the following 281-residue polypeptide: Sulfur carrier protein FdhD (281 aa).

Catalysis depends on Cys-117, which acts as the Cysteine persulfide intermediate.

The protein belongs to the FdhD family.

The protein resides in the cytoplasm. In terms of biological role, required for formate dehydrogenase (FDH) activity. Acts as a sulfur carrier protein that transfers sulfur from IscS to the molybdenum cofactor prior to its insertion into FDH. The protein is Sulfur carrier protein FdhD of Xanthomonas oryzae pv. oryzae (strain MAFF 311018).